A 127-amino-acid polypeptide reads, in one-letter code: Holo-[acyl-carrier-protein] synthase (127 aa).

Mg(2+)-binding residues include aspartate 8 and glutamate 56.

It belongs to the P-Pant transferase superfamily. AcpS family. The cofactor is Mg(2+).

The protein localises to the cytoplasm. It catalyses the reaction apo-[ACP] + CoA = holo-[ACP] + adenosine 3',5'-bisphosphate + H(+). In terms of biological role, transfers the 4'-phosphopantetheine moiety from coenzyme A to a Ser of acyl-carrier-protein. The sequence is that of Holo-[acyl-carrier-protein] synthase from Caldanaerobacter subterraneus subsp. tengcongensis (strain DSM 15242 / JCM 11007 / NBRC 100824 / MB4) (Thermoanaerobacter tengcongensis).